The following is a 906-amino-acid chain: Eukaryotic translation initiation factor 3 subunit C (906 aa).

Residues 1-22 (MSRFFANGSDSESESSEEEVQA) form a disordered region. A compositionally biased stretch (acidic residues) spans 11–20 (SESESSEEEV). Residues Ser-34, Ser-165, Ser-176, and Ser-185 each carry the phosphoserine modification. The interval 158 to 283 (REAPDQESEA…KRPEDDEDGE (126 aa)) is disordered. Positions 162 to 186 (DQESEAEDEEAAQDSDGGDAGDDSD) are enriched in acidic residues. Residues 195 to 209 (EAAPKVAKTVPAKAA) are compositionally biased toward low complexity. Positions 211 to 237 (ADDDDSDDSIDWDSDSETETESSDDEN) are enriched in acidic residues. The span at 242–270 (MRERFLKRTTEKEEKDDDKRKDKRKEQKI) shows a compositional bias: basic and acidic residues. The PCI domain occupies 641 to 817 (FHMHINLELL…ETVVMHRSEP (177 aa)). 2 disordered regions span residues 853–873 (GNMG…NWGG) and 887–906 (QRGR…IDEE). A compositionally biased stretch (low complexity) spans 894–906 (QQQQQQVQTIDEE).

This sequence belongs to the eIF-3 subunit C family. In terms of assembly, component of the eukaryotic translation initiation factor 3 (eIF-3) complex. The eIF-3 complex interacts with pix.

It localises to the cytoplasm. In terms of biological role, component of the eukaryotic translation initiation factor 3 (eIF-3) complex, which is involved in protein synthesis of a specialized repertoire of mRNAs and, together with other initiation factors, stimulates binding of mRNA and methionyl-tRNAi to the 40S ribosome. The eIF-3 complex specifically targets and initiates translation of a subset of mRNAs involved in cell proliferation. The chain is Eukaryotic translation initiation factor 3 subunit C from Drosophila ananassae (Fruit fly).